Consider the following 95-residue polypeptide: Co-chaperonin GroES (95 aa).

This sequence belongs to the GroES chaperonin family. Heptamer of 7 subunits arranged in a ring. Interacts with the chaperonin GroEL.

The protein resides in the cytoplasm. Functionally, together with the chaperonin GroEL, plays an essential role in assisting protein folding. The GroEL-GroES system forms a nano-cage that allows encapsulation of the non-native substrate proteins and provides a physical environment optimized to promote and accelerate protein folding. GroES binds to the apical surface of the GroEL ring, thereby capping the opening of the GroEL channel. In Maricaulis maris (strain MCS10) (Caulobacter maris), this protein is Co-chaperonin GroES.